A 133-amino-acid polypeptide reads, in one-letter code: Small ribosomal subunit protein uS9 (133 aa).

Belongs to the universal ribosomal protein uS9 family.

This is Small ribosomal subunit protein uS9 from Ureaplasma parvum serovar 3 (strain ATCC 700970).